Reading from the N-terminus, the 470-residue chain is Tert-butanol monooxygenase / tert-amyl alcohol desaturase oxygenase subunit (470 aa).

The Rieske domain maps to 51 to 155 (WQPVCLSQEL…AFERNGLVFA (105 aa)). Residues cysteine 91, histidine 93, cysteine 110, and histidine 113 each contribute to the [2Fe-2S] cluster site.

This sequence belongs to the bacterial ring-hydroxylating dioxygenase alpha subunit family. As to quaternary structure, this two-component enzyme is composed of an oxygenase (MdpJ) and a reductase (MdpK). [2Fe-2S] cluster is required as a cofactor.

The enzyme catalyses tert-butanol + NADPH + O2 + H(+) = 2-methylpropane-1,2-diol + NADP(+) + H2O. The catalysed reaction is 2-methylbutan-2-ol + NADPH + O2 + H(+) = 3-hydroxy-3-methylbut-1-ene + NADP(+) + 2 H2O. In terms of biological role, oxygenase component of a two-component system involved in the degradation of tertiary alcohols such as tert-butyl alcohol (TBA) and tert-amyl alcohol (TAA). In the presence of TBA, catalyzes the hydroxylation of TBA to 2-methylpropane-1,2-diol. In the presence of TAA, functions as a desaturase, enabling the degradation of TAA and resulting in the formation of the hemiterpene 3-hydroxy-3-methylbut-1-ene. The specificity of the catalysis depends strongly on the molecule structure of the substrate, allowing either hydroxylation or desaturation reactions. Also catalyzes the desaturation of the tertiary alcohol 3-methyl-3-pentanol (a C6 homolog of TBA and TAA) to 3-methyl-1-penten-3-ol, with lower efficiency. In addition, can transform some secondary alcohols, including the hydroxylation of 2-propanol to 1,2-propanediol, and the desaturation of 2-butanol, 3-methyl-2-butanol and 3-pentanol. In Aquincola tertiaricarbonis, this protein is Tert-butanol monooxygenase / tert-amyl alcohol desaturase oxygenase subunit.